A 387-amino-acid polypeptide reads, in one-letter code: 3-ketoacyl-CoA thiolase (387 aa).

C91 (acyl-thioester intermediate) is an active-site residue. Active-site proton acceptor residues include H343 and C373.

Belongs to the thiolase-like superfamily. Thiolase family. As to quaternary structure, heterotetramer of two alpha chains (FadB) and two beta chains (FadA).

It is found in the cytoplasm. It catalyses the reaction an acyl-CoA + acetyl-CoA = a 3-oxoacyl-CoA + CoA. It functions in the pathway lipid metabolism; fatty acid beta-oxidation. Catalyzes the final step of fatty acid oxidation in which acetyl-CoA is released and the CoA ester of a fatty acid two carbons shorter is formed. The sequence is that of 3-ketoacyl-CoA thiolase from Shewanella frigidimarina (strain NCIMB 400).